The sequence spans 488 residues: Arginine biosynthesis bifunctional protein ArgJ, mitochondrial (488 aa).

Positions 227, 250, 261, 340, 483, and 488 each coordinate substrate. Residue Thr261 is the Nucleophile of the active site.

The protein belongs to the ArgJ family. As to quaternary structure, heterodimer of an alpha and a beta chain. In terms of processing, the alpha and beta chains are autoproteolytically processed from a single precursor protein within the mitochondrion.

The protein resides in the mitochondrion matrix. It catalyses the reaction N(2)-acetyl-L-ornithine + L-glutamate = N-acetyl-L-glutamate + L-ornithine. It carries out the reaction L-glutamate + acetyl-CoA = N-acetyl-L-glutamate + CoA + H(+). It participates in amino-acid biosynthesis; L-arginine biosynthesis; L-ornithine and N-acetyl-L-glutamate from L-glutamate and N(2)-acetyl-L-ornithine (cyclic): step 1/1. Its pathway is amino-acid biosynthesis; L-arginine biosynthesis; N(2)-acetyl-L-ornithine from L-glutamate: step 1/4. Its function is as follows. Catalyzes two activities which are involved in the cyclic version of arginine biosynthesis: the synthesis of acetylglutamate from glutamate and acetyl-CoA, and of ornithine by transacetylation between acetylornithine and glutamate. In Thalassiosira pseudonana (Marine diatom), this protein is Arginine biosynthesis bifunctional protein ArgJ, mitochondrial.